Here is a 1480-residue protein sequence, read N- to C-terminus: Cystic fibrosis transmembrane conductance regulator (1480 aa).

The Cytoplasmic segment spans residues 1 to 77; that stretch reads MQRSPLEKAS…KLINALRRCF (77 aa). Residues 78 to 98 traverse the membrane as a helical segment; the sequence is FWRFMFYGILLYLGEVTKAVQ. The ABC transmembrane type-1 1 domain maps to 81 to 365; it reads FMFYGILLYL…WAVQTWYDSL (285 aa). Over 99 to 122 the chain is Extracellular; the sequence is PLLLGRIIASYDPDNKTERSIAIY. Residues 123-146 form a helical membrane-spanning segment; it reads LGIGLCLLFIVRTLLLHPAIFGLH. Over 147–195 the chain is Cytoplasmic; the sequence is HIGMQMRIAMFSLIYKKTLKLSSRVLDKISIGQLVSLLSNNLNKFDEGL. Residues 196-216 form a helical membrane-spanning segment; the sequence is ALAHFVWIAPLQVALLMGLIW. At 217–222 the chain is on the extracellular side; the sequence is ELLQAS. A helical membrane pass occupies residues 223–243; it reads AFCGLGFLIVLALFQAGLGRM. The Cytoplasmic portion of the chain corresponds to 244 to 298; that stretch reads MMKYRDQRAGKINERLVITSEMIENIQSVKAYCWEEAMEKMIENLRQTELKLTRK. The helical transmembrane segment at 299 to 319 threads the bilayer; that stretch reads AAYVRYFNSSAFFFSGFFVVF. Residues 320 to 339 are Extracellular-facing; the sequence is LSVLPYALIKGIVLRKIFTT. Residues 340–358 traverse the membrane as a helical segment; the sequence is ISFCIVLRMAVTRQFPWAV. Over 359-858 the chain is Cytoplasmic; that stretch reads QTWYDSLGAI…YLRYITLHKS (500 aa). Residues Trp401, Ser434, 458 to 465, and Gln493 contribute to the ATP site; that span reads GSTGAGKT. One can recognise an ABC transporter 1 domain in the interval 423 to 646; it reads NGDDNLFFSN…RPDFSSKLMG (224 aa). Cys524 carries S-palmitoyl cysteine lipidation. Ser549 and Ser660 each carry phosphoserine. Positions 654-831 are disordered R region; it reads SSERRNSILT…EEINEEDLKE (178 aa). At Ser670 the chain carries Phosphoserine; by PKA. At Ser686 the chain carries Phosphoserine. Residue Lys688 forms a Glycyl lysine isopeptide (Lys-Gly) (interchain with G-Cter in ubiquitin) linkage. Ser700 and Ser712 each carry phosphoserine. A Phosphothreonine modification is found at Thr717. Residues Ser737, Ser753, Ser768, Ser790, Ser795, and Ser813 each carry the phosphoserine modification. The chain crosses the membrane as a helical span at residues 859-879; the sequence is LIFVLIWCLVIFLAEVAASLV. The region spanning 859 to 1155 is the ABC transmembrane type-1 2 domain; the sequence is LIFVLIWCLV…AVNSSIDVDS (297 aa). The Extracellular portion of the chain corresponds to 880 to 918; that stretch reads VLWFLGNTPFQDKGNSTYSRNNSYAVIITNTSSYYVFYI. N-linked (GlcNAc...) asparagine glycans are attached at residues Asn894, Asn900, and Asn909. The chain crosses the membrane as a discontinuously helical span at residues 919 to 939; sequence YVGVADTLLALGFFRGLPLVH. The Cytoplasmic segment spans residues 940–990; sequence TLITVSKILHHKMLHSVLQAPMSTLNTLKAGGILNRFSKDIAILDDLLPLT. The chain crosses the membrane as a helical span at residues 991–1011; sequence IFDFIQLLLIVIGAIAVVSVL. Over 1012–1013 the chain is Extracellular; sequence QP. The helical transmembrane segment at 1014-1034 threads the bilayer; it reads YILLATVPVIAAFILLRAYFL. The Cytoplasmic portion of the chain corresponds to 1035-1095; it reads QTSQQLKQLE…TANWFLYLAT (61 aa). The chain crosses the membrane as a helical span at residues 1096–1116; sequence LRWFQMRIEIIFVIFFIAVTF. Residues 1117-1130 lie on the Extracellular side of the membrane; it reads ISILTTGEGEGTVG. The chain crosses the membrane as a helical span at residues 1131–1151; it reads IILTLAMNIMSTLQWAVNSSI. The Cytoplasmic portion of the chain corresponds to 1152–1480; sequence DVDSLMRSVS…TEEEVQETRL (329 aa). In terms of domain architecture, ABC transporter 2 spans 1210 to 1443; it reads MTIKDLTAKY…KSLFQQAISH (234 aa). ATP contacts are provided by residues Tyr1219 and 1244–1251; that span reads GRTGSGKS. The tract at residues 1386–1480 is interaction with GORASP2; that stretch reads RALKQAFADC…TEEEVQETRL (95 aa). Cys1395 carries the S-palmitoyl cysteine lipid modification. Phosphoserine is present on residues Ser1444 and Ser1456. A disordered region spans residues 1452-1480; the sequence is HRNSSKYKSPPQIASLKEETEEEVQETRL. The span at 1470–1480 shows a compositional bias: acidic residues; it reads ETEEEVQETRL. The PDZ-binding signature appears at 1478–1480; sequence TRL.

It belongs to the ABC transporter superfamily. ABCC family. CFTR transporter (TC 3.A.1.202) subfamily. In terms of assembly, monomer; does not require oligomerization for channel activity. May form oligomers in the membrane. Interacts with SLC26A3, SLC26A6 and NHERF1. Interacts with SHANK2. Interacts with MYO6. Interacts (via C-terminus) with GOPC (via PDZ domain); this promotes CFTR internalization and thereby decreases channel activity. Interacts with SLC4A7 through NHERF1. Found in a complex with MYO5B and RAB11A. Interacts with ANO1. Interacts with SLC26A8. Interacts with AHCYL1; the interaction increases CFTR activity. Interacts with CSE1L. The core-glycosylated form interacts with GORASP2 (via PDZ GRASP-type 1 domain) in respone to ER stress. Interacts with MARCHF2; the interaction leads to CFTR ubiqtuitination and degradation. Interacts with ADGRG2. N-glycosylated. In terms of processing, phosphorylated; cAMP treatment promotes phosphorylation and activates the channel. Dephosphorylation decreases the ATPase activity (in vitro). Phosphorylation at PKA sites activates the channel. Phosphorylation at PKC sites enhances the response to phosphorylation by PKA. Phosphorylated by AMPK; this inhibits channel activity. Post-translationally, ubiquitinated, leading to its degradation in the lysosome. Deubiquitination by USP10 in early endosomes enhances its endocytic recycling to the cell membrane. Ubiquitinated by RNF185 during ER stress. Ubiquitinated by MARCHF2.

It is found in the apical cell membrane. It localises to the early endosome membrane. The protein resides in the cell membrane. Its subcellular location is the recycling endosome membrane. The protein localises to the endoplasmic reticulum membrane. It is found in the nucleus. The enzyme catalyses ATP + H2O + closed Cl(-) channel = ADP + phosphate + open Cl(-) channel.. It catalyses the reaction chloride(in) = chloride(out). It carries out the reaction hydrogencarbonate(in) = hydrogencarbonate(out). The catalysed reaction is ATP + H2O = ADP + phosphate + H(+). Functionally, epithelial ion channel that plays an important role in the regulation of epithelial ion and water transport and fluid homeostasis. Mediates the transport of chloride ions across the cell membrane. Possesses an intrinsic ATPase activity and utilizes ATP to gate its channel; the passive flow of anions through the channel is gated by cycles of ATP binding and hydrolysis by the ATP-binding domains. The ion channel is also permeable to HCO(3)(-); selectivity depends on the extracellular chloride concentration. Exerts its function also by modulating the activity of other ion channels and transporters. Contributes to the regulation of the pH and the ion content of the epithelial fluid layer. Modulates the activity of the epithelial sodium channel (ENaC) complex, in part by regulating the cell surface expression of the ENaC complex. May regulate bicarbonate secretion and salvage in epithelial cells by regulating the transporter SLC4A7. Can inhibit the chloride channel activity of ANO1. Plays a role in the chloride and bicarbonate homeostasis during sperm epididymal maturation and capacitation. The polypeptide is Cystic fibrosis transmembrane conductance regulator (Ateles geoffroyi (Black-handed spider monkey)).